We begin with the raw amino-acid sequence, 123 residues long: Ribonuclease P protein component 2 (123 aa).

It belongs to the eukaryotic/archaeal RNase P protein component 2 family. As to quaternary structure, consists of a catalytic RNA component and at least 4-5 protein subunits.

The protein resides in the cytoplasm. It catalyses the reaction Endonucleolytic cleavage of RNA, removing 5'-extranucleotides from tRNA precursor.. Part of ribonuclease P, a protein complex that generates mature tRNA molecules by cleaving their 5'-ends. The sequence is that of Ribonuclease P protein component 2 from Sulfurisphaera tokodaii (strain DSM 16993 / JCM 10545 / NBRC 100140 / 7) (Sulfolobus tokodaii).